The primary structure comprises 456 residues: UDP-N-acetylglucosamine 1-carboxyvinyltransferase (456 aa).

Position 34–35 (34–35 (KN)) interacts with phosphoenolpyruvate. A UDP-N-acetyl-alpha-D-glucosamine-binding site is contributed by Arg-104. Cys-128 functions as the Proton donor in the catalytic mechanism. 2-(S-cysteinyl)pyruvic acid O-phosphothioketal is present on Cys-128. The UDP-N-acetyl-alpha-D-glucosamine site is built by Asp-319 and Ile-341.

Belongs to the EPSP synthase family. MurA subfamily.

It is found in the cytoplasm. The catalysed reaction is phosphoenolpyruvate + UDP-N-acetyl-alpha-D-glucosamine = UDP-N-acetyl-3-O-(1-carboxyvinyl)-alpha-D-glucosamine + phosphate. It participates in cell wall biogenesis; peptidoglycan biosynthesis. Its function is as follows. Cell wall formation. Adds enolpyruvyl to UDP-N-acetylglucosamine. This is UDP-N-acetylglucosamine 1-carboxyvinyltransferase from Prochlorococcus marinus (strain MIT 9312).